Consider the following 261-residue polypeptide: Thiazole synthase (261 aa).

Residue Lys-102 is the Schiff-base intermediate with DXP of the active site. 1-deoxy-D-xylulose 5-phosphate contacts are provided by residues Gly-163, Ala-189 to Gly-190, and Asn-211 to Thr-212.

It belongs to the ThiG family. In terms of assembly, homotetramer. Forms heterodimers with either ThiH or ThiS.

It is found in the cytoplasm. The enzyme catalyses [ThiS sulfur-carrier protein]-C-terminal-Gly-aminoethanethioate + 2-iminoacetate + 1-deoxy-D-xylulose 5-phosphate = [ThiS sulfur-carrier protein]-C-terminal Gly-Gly + 2-[(2R,5Z)-2-carboxy-4-methylthiazol-5(2H)-ylidene]ethyl phosphate + 2 H2O + H(+). It participates in cofactor biosynthesis; thiamine diphosphate biosynthesis. Its function is as follows. Catalyzes the rearrangement of 1-deoxy-D-xylulose 5-phosphate (DXP) to produce the thiazole phosphate moiety of thiamine. Sulfur is provided by the thiocarboxylate moiety of the carrier protein ThiS. In vitro, sulfur can be provided by H(2)S. The protein is Thiazole synthase of Acinetobacter baylyi (strain ATCC 33305 / BD413 / ADP1).